We begin with the raw amino-acid sequence, 738 residues long: Prolyl oligopeptidase A (738 aa).

Residues Ser581, Asp665, and His701 each act as charge relay system in the active site.

It belongs to the peptidase S9A family. As to quaternary structure, monomer.

The enzyme catalyses Hydrolysis of Pro-|-Xaa &gt;&gt; Ala-|-Xaa in oligopeptides.. Its function is as follows. Housekeeping prolyl oligopeptidase (POP) that behaves like a conventional POP by cleaving peptide bonds on the C-terminal side of prolyl residues within peptides that are up to approximately 30 amino acids long. The chain is Prolyl oligopeptidase A from Galerina marginata (strain CBS 339.88).